A 318-amino-acid polypeptide reads, in one-letter code: Olfactory receptor 2T3 (318 aa).

At 1 to 30 the chain is on the extracellular side; it reads MCSGNQTSQNQTASTDFTLTGLFAESKHAA. 2 N-linked (GlcNAc...) asparagine glycosylation sites follow: Asn5 and Asn10. The chain crosses the membrane as a helical span at residues 31 to 54; the sequence is LLYTVTFLLFLMALTGNALLILLI. Residues 55-62 lie on the Cytoplasmic side of the membrane; that stretch reads HSEPRLHT. The helical transmembrane segment at 63 to 84 threads the bilayer; it reads PMYFFISQLALMDLMYLCVTVP. The Extracellular portion of the chain corresponds to 85–105; sequence KMLVGQVTGDDTISPSGCGIQ. An intrachain disulfide couples Cys102 to Cys194. Residues 106 to 125 traverse the membrane as a helical segment; it reads MFFYLTLAGAEVFLLAAMAY. The Cytoplasmic portion of the chain corresponds to 126 to 144; sequence DRYAAVCRPLHYPLLMNQR. The helical transmembrane segment at 145-163 threads the bilayer; sequence VCQLLVSACWVLGMVDGLL. Residues 164 to 200 lie on the Extracellular side of the membrane; the sequence is LTPITMSFPFCQSRKILSFFCETPALLKLSCSDVSLY. Residues 201 to 224 form a helical membrane-spanning segment; sequence KTLMYLCCILMLLAPIMVISSSYT. Residues 225–241 lie on the Cytoplasmic side of the membrane; sequence LILHLIHRMNSAAGHRK. A helical membrane pass occupies residues 242–264; the sequence is ALATCSSHMIIVLLLFGASFYTY. Over 265-277 the chain is Extracellular; the sequence is MLPSSYHTAEQDM. A helical transmembrane segment spans residues 278 to 297; the sequence is MVSAFYTIFTPVLNPLIYSL. Residues 298 to 318 are Cytoplasmic-facing; sequence RNKDVTRALRSMMQSRMNQEK.

This sequence belongs to the G-protein coupled receptor 1 family.

It is found in the cell membrane. Functionally, odorant receptor. This is Olfactory receptor 2T3 (OR2T3) from Homo sapiens (Human).